The following is a 111-amino-acid chain: Cytochrome c (111 aa).

Ala-1 is modified (N-acetylalanine). Heme c contacts are provided by Cys-22, Cys-25, and His-26. The residue at position 80 (Lys-80) is an N6,N6,N6-trimethyllysine. Residue Met-88 participates in heme c binding. Position 94 is an N6,N6,N6-trimethyllysine (Lys-94).

Belongs to the cytochrome c family. Post-translationally, binds 1 heme c group covalently per subunit.

It localises to the mitochondrion intermembrane space. Its function is as follows. Electron carrier protein. The oxidized form of the cytochrome c heme group can accept an electron from the heme group of the cytochrome c1 subunit of cytochrome reductase. Cytochrome c then transfers this electron to the cytochrome oxidase complex, the final protein carrier in the mitochondrial electron-transport chain. In Brassica napus (Rape), this protein is Cytochrome c.